The following is a 246-amino-acid chain: Ribosomal RNA small subunit methyltransferase J (246 aa).

Residues 115–116 and D169 contribute to the S-adenosyl-L-methionine site; that span reads ER.

This sequence belongs to the methyltransferase superfamily. RsmJ family.

Its subcellular location is the cytoplasm. The enzyme catalyses guanosine(1516) in 16S rRNA + S-adenosyl-L-methionine = N(2)-methylguanosine(1516) in 16S rRNA + S-adenosyl-L-homocysteine + H(+). Its function is as follows. Specifically methylates the guanosine in position 1516 of 16S rRNA. This is Ribosomal RNA small subunit methyltransferase J from Buchnera aphidicola subsp. Acyrthosiphon pisum (strain Tuc7).